The primary structure comprises 510 residues: Inositol-3-phosphate synthase (510 aa).

NAD(+) is bound by residues glycine 70, glycine 71, asparagine 72, asparagine 73, aspartate 143, isoleucine 180, glutamine 190, arginine 193, threonine 230, alanine 231, asparagine 232, threonine 233, glycine 281, serine 282, aspartate 306, serine 309, asparagine 340, asparagine 341, aspartate 342, lysine 355, glycine 393, aspartate 394, aspartate 422, and serine 423.

This sequence belongs to the myo-inositol 1-phosphate synthase family. NAD(+) is required as a cofactor.

The protein resides in the cytoplasm. It is found in the cytosol. The protein localises to the nucleus. It catalyses the reaction D-glucose 6-phosphate = 1D-myo-inositol 3-phosphate. It functions in the pathway polyol metabolism; myo-inositol biosynthesis; myo-inositol from D-glucose 6-phosphate: step 1/2. Its function is as follows. Key enzyme in myo-inositol biosynthesis pathway that catalyzes the conversion of glucose 6-phosphate to 1-myo-inositol 1-phosphate in a NAD-dependent manner. This Zea mays (Maize) protein is Inositol-3-phosphate synthase.